The chain runs to 32 residues: MSDIN-like toxin proprotein 3 (32 aa).

A propeptide spanning residues 1 to 10 (MSDINATRLP) is cleaved from the precursor. The segment at residues 11-17 (SFFFPIP) is a cross-link (cyclopeptide (Ser-Pro)). A propeptide spanning residues 18-32 (CISDDIEMVLTRGER) is cleaved from the precursor.

Belongs to the MSDIN fungal toxin family. In terms of processing, processed by the macrocyclase-peptidase enzyme POPB to yield a toxic cyclic heptapeptide. POPB first removes 10 residues from the N-terminus. Conformational trapping of the remaining peptide forces the enzyme to release this intermediate rather than proceed to macrocyclization. The enzyme rebinds the remaining peptide in a different conformation and catalyzes macrocyclization of the N-terminal 8 residues.

In terms of biological role, probable toxin that belongs to the MSDIN-like toxin family responsible for a large number of food poisoning cases and deaths. The sequence is that of MSDIN-like toxin proprotein 3 from Amanita phalloides (Death cap).